The sequence spans 141 residues: MNMEYTLSILKPDVIKRNIIGKVNTYIENSGLKIIAQKTLLLTKVQAENFYIIHKDRAYYQSLVQNMTSGPVVVQVLYGLNAVKKYREIIGATNPCDAKKGTIRGDIAKSIDENTVHGSDSLENADIEIKFFFALIEYAYL.

ATP is bound by residues Lys11, Tyr59, Arg87, Thr93, Arg104, and Asn114. The Pros-phosphohistidine intermediate role is filled by His117.

This sequence belongs to the NDK family. As to quaternary structure, homotetramer. Requires Mg(2+) as cofactor.

The protein localises to the cytoplasm. The catalysed reaction is a 2'-deoxyribonucleoside 5'-diphosphate + ATP = a 2'-deoxyribonucleoside 5'-triphosphate + ADP. It carries out the reaction a ribonucleoside 5'-diphosphate + ATP = a ribonucleoside 5'-triphosphate + ADP. In terms of biological role, major role in the synthesis of nucleoside triphosphates other than ATP. The ATP gamma phosphate is transferred to the NDP beta phosphate via a ping-pong mechanism, using a phosphorylated active-site intermediate. The sequence is that of Nucleoside diphosphate kinase from Orientia tsutsugamushi (strain Boryong) (Rickettsia tsutsugamushi).